Consider the following 551-residue polypeptide: Chaperonin GroEL (551 aa).

Residues Thr29–Pro32, Lys50, Asp86–Thr90, Gly417, and Asp499 contribute to the ATP site.

It belongs to the chaperonin (HSP60) family. As to quaternary structure, forms a cylinder of 14 subunits composed of two heptameric rings stacked back-to-back. Interacts with the co-chaperonin GroES.

It is found in the cytoplasm. It catalyses the reaction ATP + H2O + a folded polypeptide = ADP + phosphate + an unfolded polypeptide.. In terms of biological role, together with its co-chaperonin GroES, plays an essential role in assisting protein folding. The GroEL-GroES system forms a nano-cage that allows encapsulation of the non-native substrate proteins and provides a physical environment optimized to promote and accelerate protein folding. This chain is Chaperonin GroEL, found in Ehrlichia ruminantium (strain Gardel).